A 163-amino-acid chain; its full sequence is Protein-export protein SecB (163 aa).

Belongs to the SecB family. In terms of assembly, homotetramer, a dimer of dimers. One homotetramer interacts with 1 SecA dimer.

It localises to the cytoplasm. Functionally, one of the proteins required for the normal export of preproteins out of the cell cytoplasm. It is a molecular chaperone that binds to a subset of precursor proteins, maintaining them in a translocation-competent state. It also specifically binds to its receptor SecA. The sequence is that of Protein-export protein SecB from Methylibium petroleiphilum (strain ATCC BAA-1232 / LMG 22953 / PM1).